The chain runs to 120 residues: uncharacterized protein (120 aa).

A signal peptide spans 1 to 19; the sequence is MKKIVCAVVALLLTLPAWA.

This is an uncharacterized protein from Salmonella typhimurium (strain LT2 / SGSC1412 / ATCC 700720).